The chain runs to 84 residues: Small ribosomal subunit protein uS17 (84 aa).

It belongs to the universal ribosomal protein uS17 family. Part of the 30S ribosomal subunit.

One of the primary rRNA binding proteins, it binds specifically to the 5'-end of 16S ribosomal RNA. The sequence is that of Small ribosomal subunit protein uS17 from Borrelia recurrentis (strain A1).